The chain runs to 830 residues: Scavenger receptor class F member 1 (830 aa).

An N-terminal signal peptide occupies residues 1–19 (MGLGLLLPLLLLWTRGTQG). Residues 20–421 (SELDPKGQHV…CQPGSGSRDT (402 aa)) are Extracellular-facing. EGF-like domains are found at residues 53 to 87 (TIPI…AHCS), 95 to 130 (WGPD…ARCE), 155 to 191 (WSST…RRCS), and 215 to 249 (WGPE…ARCE). 12 disulfides stabilise this stretch: cysteine 57–cysteine 69, cysteine 63–cysteine 75, cysteine 77–cysteine 86, cysteine 99–cysteine 111, cysteine 105–cysteine 118, cysteine 120–cysteine 129, cysteine 159–cysteine 172, cysteine 165–cysteine 179, cysteine 181–cysteine 190, cysteine 219–cysteine 230, cysteine 225–cysteine 237, and cysteine 239–cysteine 248. Residue asparagine 289 is glycosylated (N-linked (GlcNAc...) asparagine). 2 consecutive EGF-like domains span residues 302-339 (FGES…PRCE) and 351-382 (CGST…PSCN). Disulfide bonds link cysteine 306-cysteine 319, cysteine 313-cysteine 326, cysteine 329-cysteine 338, cysteine 355-cysteine 363, cysteine 358-cysteine 370, and cysteine 372-cysteine 381. N-linked (GlcNAc...) asparagine glycosylation is found at asparagine 382 and asparagine 393. A helical membrane pass occupies residues 422–442 (ALIAGSLVPLLLLFLGLACCA). The Cytoplasmic segment spans residues 443–830 (CCCWAPRSDL…VVPISRPPEP (388 aa)). Disordered regions lie at residues 516 to 539 (GWAT…PAYC), 581 to 688 (SLAR…SGPV), and 715 to 830 (FQKG…PPEP). Serine 589 and serine 606 each carry phosphoserine. Over residues 634–643 (ESTGPEEAEA) the composition is skewed to acidic residues. The span at 644-653 (PESFPAAASP) shows a compositional bias: low complexity.

In terms of assembly, heterophilic interaction with SREC2 via its extracellular domain. The heterophilic interaction is suppressed by the presence of ligand such as Ac-LDL. Interacts with AVIL. As to expression, endothelial cells.

The protein localises to the membrane. In terms of biological role, mediates the binding and degradation of acetylated low density lipoprotein (Ac-LDL). Mediates heterophilic interactions, suggesting a function as adhesion protein. Plays a role in the regulation of neurite-like outgrowth. This is Scavenger receptor class F member 1 (SCARF1) from Homo sapiens (Human).